The sequence spans 690 residues: Cyclic nucleotide-gated channel alpha-1 (690 aa).

Residues 1–163 are Cytoplasmic-facing; sequence MKKVIINTWH…VVIDPSGNTY (163 aa). Disordered stretches follow at residues 33 to 76 and 88 to 151; these read GACS…PSQR and NVNN…EEKK. The segment covering 40–54 has biased composition (acidic residues); sequence GDDDDSASMFEESET. Over residues 64–76 the composition is skewed to polar residues; the sequence is RSNTHGSGQPSQR. Basic and acidic residues predominate over residues 111-151; it reads SKPDDKNENKKDPEKKKKKEKDKDKKKKEEKGKDKKEEEKK. Residues 164–185 form a helical membrane-spanning segment; that stretch reads YNWLFCITLPVMYNWTMIIARA. The Extracellular portion of the chain corresponds to 186 to 195; it reads CFDELQSDYL. The chain crosses the membrane as a helical span at residues 196–215; sequence EYWLAFDYLSDVVYLLDMFV. The Cytoplasmic segment spans residues 216–241; the sequence is RTRTGYLEQGLLVKEERKLIDKYKST. Residues 242–251 form a helical membrane-spanning segment; sequence FQFKLDVLSV. Residues 252-264 lie on the Extracellular side of the membrane; the sequence is IPTDLLYIKFGWN. Residues 265 to 283 form a helical membrane-spanning segment; it reads YPEIRLNRLLRISRMFEFF. Over 284–291 the chain is Cytoplasmic; it reads QRTETRTN. A helical transmembrane segment spans residues 292 to 315; the sequence is YPNIFRISNLVMYIIIIIHWNACV. An ion conduction pathway region spans residues 293–402; sequence PNIFRISNLV…NIGSMISNMN (110 aa). At 316 to 342 the chain is on the extracellular side; it reads YFSISKAIGFGNDTWVYPDVNDPDFGR. Asn-327 carries N-linked (GlcNAc...) asparagine glycosylation. The next 2 membrane-spanning stretches (helical) occupy residues 343–373 and 374–399; these read LARK…DSEY and FFVV…SMIS. A selectivity filter region spans residues 360–363; sequence TIGE. The Cytoplasmic portion of the chain corresponds to 400–690; the sequence is NMNAARAEFQ…ESGPTDSTQD (291 aa). The C-linker stretch occupies residues 403–479; that stretch reads AARAEFQARI…DTLKKVRIFA (77 aa). A cyclic nucleotide-binding domain (CNBD) region spans residues 482–603; that stretch reads EAGLLVELVL…EEKGKQILMK (122 aa). The 3',5'-cyclic GMP site is built by Gly-543, Ser-546, Arg-559, and Thr-560. Residues Arg-559 and Thr-560 each coordinate 3',5'-cyclic AMP. Positions 621 to 664 form a coiled coil; that stretch reads LEEKVTRMESSVDLLQTRFARILAEYESMQQKLKQRLTKVEKFL.

This sequence belongs to the cyclic nucleotide-gated cation channel (TC 1.A.1.5) family. CNGA1 subfamily. As to quaternary structure, forms a heterotetramer with CNGB1 in a 3:1 ratio. May also form cyclic nucleotide-activated homotetrameric channels, that are efficiently activated by saturating cGMP, but poorly activated by saturating cAMP compared to the heterotetramer with CNGB1. The channel binds Ca(2+)-bound CALM1 via CaM1 and CaM2 regions of the CNGB1 subunit; this interaction modulates the affinity of the channel for cNMPs in response to intracellular Ca(2+) levels. As to expression, expressed in the retina, in rod cells (at protein level).

It is found in the cell membrane. It carries out the reaction Ca(2+)(in) = Ca(2+)(out). The catalysed reaction is Na(+)(in) = Na(+)(out). It catalyses the reaction K(+)(in) = K(+)(out). The enzyme catalyses NH4(+)(in) = NH4(+)(out). It carries out the reaction Rb(+)(in) = Rb(+)(out). The catalysed reaction is Li(+)(in) = Li(+)(out). It catalyses the reaction Cs(+)(in) = Cs(+)(out). Its function is as follows. Pore-forming subunit of the rod cyclic nucleotide-gated channel. Mediates rod photoresponses at dim light converting transient changes in intracellular cGMP levels into electrical signals. In the dark, cGMP levels are high and keep the channel open enabling a steady inward current carried by Na(+) and Ca(2+) ions that leads to membrane depolarization and neurotransmitter release from synaptic terminals. Upon photon absorption cGMP levels decline leading to channel closure and membrane hyperpolarization that ultimately slows neurotransmitter release and signals the presence of light, the end point of the phototransduction cascade. Conducts cGMP- and cAMP-gated ion currents, with permeability for monovalent and divalent cations. The selectivity for Ca(2+) over Na(+) increases with cGMP concentrations, whereas the selectivity among monovalent ions is independent of the cGMP levels. The protein is Cyclic nucleotide-gated channel alpha-1 of Bos taurus (Bovine).